We begin with the raw amino-acid sequence, 177 residues long: Peptidyl-prolyl cis-trans isomerase H (177 aa).

Alanine 2 carries the post-translational modification N-acetylalanine. The region spanning 14 to 176 (FFDVSIGGQE…LPVVISQCGE (163 aa)) is the PPIase cyclophilin-type domain.

It belongs to the cyclophilin-type PPIase family. PPIase H subfamily. As to quaternary structure, interacts directly with PRPF4. Part of a heteromeric complex containing PPIH, PRPF3 and PRPF4 that is stable in the absence of RNA. Component of the U4/U6-U5 tri-snRNP complex composed of the U4, U6 and U5 snRNAs and at least PRPF3, PRPF4, PRPF6, PRPF8, PRPF31, SNRNP200, TXNL4A, SNRNP40, DDX23, CD2BP2, PPIH, SNU13, EFTUD2, SART1 and USP39. Heterodimer with PRPF18.

It is found in the nucleus speckle. The protein localises to the cytoplasm. It carries out the reaction [protein]-peptidylproline (omega=180) = [protein]-peptidylproline (omega=0). Its activity is regulated as follows. Inhibited by cyclosporin A. Functionally, PPIase that catalyzes the cis-trans isomerization of proline imidic peptide bonds in oligopeptides and may therefore assist protein folding. Participates in pre-mRNA splicing. May play a role in the assembly of the U4/U5/U6 tri-snRNP complex, one of the building blocks of the spliceosome. May act as a chaperone. This chain is Peptidyl-prolyl cis-trans isomerase H (PPIH), found in Homo sapiens (Human).